The following is a 341-amino-acid chain: MSKPSVGINGFGRIGRLVLRAAVEKDSVNVVAVNDPFISIDYMVYLFQYDSTHGRFKGTVAHEGDYLLVAKEGKSQHKIKVYNSRDPAEIQWGSAGADYVVESTGVFTTIEKANAHLKGGAKKVIISAPSADAPMFVVGVNHEKYDHANDHIISNASCTTNCLAPLAKVINDNFGIIEGLMTTVHAVTATQKTVDGPSGKLWRDGRGAGQNIIPASTGAAKAVGKVIPELNGKLTGMAFRVPTPDVSVVDLTARLEKPASLDDIKKVVKAAAEGPLKGVLAYTEDQVVSTDFVSDTHSSIFDAGASIILNPNFVKLISWYDNEFGYSNRVVDLISYIATKA.

NAD(+) is bound by residues 13-14 (RI), Asp35, and Arg85. Residues 157–159 (SCT), Thr188, 217–218 (TG), and Arg240 each bind D-glyceraldehyde 3-phosphate. The Nucleophile role is filled by Cys158. Asn322 serves as a coordination point for NAD(+).

Belongs to the glyceraldehyde-3-phosphate dehydrogenase family. In terms of assembly, homotetramer.

Its subcellular location is the cytoplasm. The catalysed reaction is D-glyceraldehyde 3-phosphate + phosphate + NAD(+) = (2R)-3-phospho-glyceroyl phosphate + NADH + H(+). Its pathway is carbohydrate degradation; glycolysis; pyruvate from D-glyceraldehyde 3-phosphate: step 1/5. The protein is Glyceraldehyde-3-phosphate dehydrogenase 3.1 of Caenorhabditis briggsae.